Reading from the N-terminus, the 289-residue chain is Iodotyrosine deiodinase 1 (289 aa).

Residues 1–21 (MYFLTPILVAILCILVVWIFK) form a helical membrane-spanning segment. Over residues 29 to 58 (KKKGEPRTRAEARPWVDEDLKDSSDLHQAE) the composition is skewed to basic and acidic residues. The segment at 29 to 69 (KKKGEPRTRAEARPWVDEDLKDSSDLHQAEEDADEWQESEE) is disordered. The span at 59–69 (EDADEWQESEE) shows a compositional bias: acidic residues. Residues 100-104 (RRSVR), Ser-128, and 128-129 (SG) contribute to the FMN site. 3-iodo-L-tyrosine contacts are provided by Ala-130, Glu-157, Tyr-161, and Lys-182. Residues 237–239 (TTT) and Arg-279 contribute to the FMN site.

The protein belongs to the nitroreductase family. In terms of assembly, homodimer. FMN serves as cofactor. Expressed at a high level in thyroid gland (at protein level). Expressed at a high level in thyroid gland and at lower level in kidney and trachea.

It localises to the cell membrane. The protein resides in the cytoplasmic vesicle membrane. The catalysed reaction is 2 iodide + L-tyrosine + 2 NADP(+) = 3,5-diiodo-L-tyrosine + 2 NADPH + H(+). The enzyme catalyses iodide + L-tyrosine + NADP(+) = 3-iodo-L-tyrosine + NADPH. It catalyses the reaction 3-iodo-L-tyrosine + iodide + NADP(+) = 3,5-diiodo-L-tyrosine + NADPH + H(+). It carries out the reaction L-tyrosine + chloride + NADP(+) = 3-chloro-L-tyrosine + NADPH. The catalysed reaction is bromide + L-tyrosine + NADP(+) = 3-bromo-L-tyrosine + NADPH. Catalyzes the dehalogenation of halotyrosines such as 3-bromo-L-tyrosine, 3-chloro-L-tyrosine, 3-iodo-L-tyrosine and 3,5-diiodo-L-tyrosine. During thyroid hormone biosynthesis, facilitates iodide salvage by catalysing the oxidative NADPH-dependent deiodination of the halogenated by-products of thyroid hormone production, monoiodotyrosine (L-MIT) and diiodotyrosine (L-DIT). The scavanged iodide can then reenter the hormone-producing pathways. Acts more efficiently on 3-iodo-L-tyrosine than 3,5-diiodo-L-tyrosine. This chain is Iodotyrosine deiodinase 1, found in Homo sapiens (Human).